A 308-amino-acid polypeptide reads, in one-letter code: D-alanine--D-alanine ligase (308 aa).

An ATP-grasp domain is found at 104–304 (KQALVPHGIP…YAELVERIVE (201 aa)). An ATP-binding site is contributed by 131 to 187 (LPRPYVLKPVNEGSSVGVAIVRDDSNYGNPISRDALGPWQQFDRLLAEPFIKGRELT). 3 residues coordinate Mg(2+): aspartate 255, glutamate 271, and asparagine 273.

The protein belongs to the D-alanine--D-alanine ligase family. It depends on Mg(2+) as a cofactor. The cofactor is Mn(2+).

It is found in the cytoplasm. It catalyses the reaction 2 D-alanine + ATP = D-alanyl-D-alanine + ADP + phosphate + H(+). Its pathway is cell wall biogenesis; peptidoglycan biosynthesis. Its function is as follows. Cell wall formation. The chain is D-alanine--D-alanine ligase from Sphingopyxis alaskensis (strain DSM 13593 / LMG 18877 / RB2256) (Sphingomonas alaskensis).